Consider the following 200-residue polypeptide: Phospholipase A2 inhibitor gamma subunit B (200 aa).

The first 19 residues, 1–19, serve as a signal peptide directing secretion; sequence MKSFLFCCLLGTFLAIGMC. 8 disulfide bridges follow: cysteine 22–cysteine 46, cysteine 25–cysteine 32, cysteine 39–cysteine 67, cysteine 73–cysteine 94, cysteine 95–cysteine 100, cysteine 120–cysteine 145, cysteine 138–cysteine 165, and cysteine 171–cysteine 191. N-linked (GlcNAc...) asparagine glycosylation occurs at asparagine 33.

This sequence belongs to the CNF-like-inhibitor family. In terms of assembly, heterodimer of subunit A and subunit B. In terms of tissue distribution, expressed by the liver.

It localises to the secreted. Inhibits the enzymatic activity of phospholipase A2 (PA2). The polypeptide is Phospholipase A2 inhibitor gamma subunit B (Gloydius brevicaudus siniticus (Chinese mamushi)).